The primary structure comprises 317 residues: NAD-dependent protein deacetylase Sirt6 (317 aa).

The 247-residue stretch at 27 to 273 (DEVVAEKCQE…SKVCKLLGVE (247 aa)) folds into the Deacetylase sirtuin-type domain. 7 residues coordinate NAD(+): A53, T57, F64, R65, W71, Q113, and H133. H133 acts as the Proton acceptor in catalysis. Residues C141, C144, C166, and C177 each contribute to the Zn(2+) site. 4 residues coordinate NAD(+): G215, N241, Q243, and V259.

It belongs to the sirtuin family. Class IV subfamily. It depends on Zn(2+) as a cofactor. Widely expressed.

It is found in the nucleus. Its subcellular location is the chromosome. The enzyme catalyses N(6)-acetyl-L-lysyl-[protein] + NAD(+) + H2O = 2''-O-acetyl-ADP-D-ribose + nicotinamide + L-lysyl-[protein]. Its function is as follows. NAD-dependent histone deacylase that acts as a regulator of life span. In Drosophila melanogaster (Fruit fly), this protein is NAD-dependent protein deacetylase Sirt6.